A 263-amino-acid polypeptide reads, in one-letter code: 3-deoxy-manno-octulosonate cytidylyltransferase (263 aa).

Belongs to the KdsB family.

The protein resides in the cytoplasm. The enzyme catalyses 3-deoxy-alpha-D-manno-oct-2-ulosonate + CTP = CMP-3-deoxy-beta-D-manno-octulosonate + diphosphate. The protein operates within nucleotide-sugar biosynthesis; CMP-3-deoxy-D-manno-octulosonate biosynthesis; CMP-3-deoxy-D-manno-octulosonate from 3-deoxy-D-manno-octulosonate and CTP: step 1/1. It participates in bacterial outer membrane biogenesis; lipopolysaccharide biosynthesis. Its function is as follows. Activates KDO (a required 8-carbon sugar) for incorporation into bacterial lipopolysaccharide in Gram-negative bacteria. The chain is 3-deoxy-manno-octulosonate cytidylyltransferase from Burkholderia multivorans (strain ATCC 17616 / 249).